A 104-amino-acid chain; its full sequence is Large ribosomal subunit protein bL21c (104 aa).

This sequence belongs to the bacterial ribosomal protein bL21 family. In terms of assembly, part of the 50S ribosomal subunit.

It is found in the plastid. It localises to the chloroplast. Its function is as follows. This protein binds to 23S rRNA. This chain is Large ribosomal subunit protein bL21c, found in Porphyra purpurea (Red seaweed).